We begin with the raw amino-acid sequence, 299 residues long: Acetylglutamate kinase (299 aa).

Substrate contacts are provided by residues 70–71, R92, and N186; that span reads GG.

Belongs to the acetylglutamate kinase family. ArgB subfamily.

The protein localises to the cytoplasm. It carries out the reaction N-acetyl-L-glutamate + ATP = N-acetyl-L-glutamyl 5-phosphate + ADP. It functions in the pathway amino-acid biosynthesis; L-arginine biosynthesis; N(2)-acetyl-L-ornithine from L-glutamate: step 2/4. Functionally, catalyzes the ATP-dependent phosphorylation of N-acetyl-L-glutamate. The sequence is that of Acetylglutamate kinase from Caldanaerobacter subterraneus subsp. tengcongensis (strain DSM 15242 / JCM 11007 / NBRC 100824 / MB4) (Thermoanaerobacter tengcongensis).